Consider the following 818-residue polypeptide: Catenin beta (818 aa).

Composition is skewed to polar residues over residues 1–21 (METYQQMNSGSGPRSVGTPQG) and 48–66 (GDSGIQSGATTQAPPSVSS). Disordered regions lie at residues 1–24 (METYQQMNSGSGPRSVGTPQGQYM) and 48–71 (GDSGIQSGATTQAPPSVSSKHGLD). 7 ARM repeats span residues 164–203 (NYQDDADLATRAIPELTKLLNDEDQVVVSQAAMMVHQLSK), 248–287 (RQGLLTIFKSGGIPALVKLLSSPVESVLFYAITTLHNLLL), 412–451 (DAATKSSDIEGLLQMLVQLLASNDINIVTCAAGILSNLTC), 454–495 (QRNK…HLTS), 501–541 (EMAQ…NLAL), 543–582 (PANHAPLREHGAIPRIVQLLIRAHQDTQRRATAGSGNTSA), and 648–687 (KEGAEMIEQEGTTAPLTELLHSRNEGVATYAAAVLFRMSE). A disordered region spans residues 732-818 (QGFRGYQGSG…QMAAWFDTDL (87 aa)).

The protein belongs to the beta-catenin family.

The protein resides in the cytoplasm. The protein localises to the cytoskeleton. Functionally, binds to the cytoplasmic domain of the cell-cell adhesion molecule E-cadherin, and perhaps to other (membrane) proteins. The association of catenins to cadherins produces a complex which is linked to the actin filament network, and which seems to be of primary importance for cadherins cell-adhesion properties. In Urechis caupo (Innkeeper worm), this protein is Catenin beta.